The primary structure comprises 110 residues: U-scoloptoxin(16)-Er7a (110 aa).

A signal peptide spans 1–26 (MTSTRKLSVSCLIVFMVSSLIAVSSG).

This sequence belongs to the scoloptoxin-16 family. In terms of processing, contains 4 disulfide bonds. In terms of tissue distribution, expressed by the venom gland.

It is found in the secreted. The chain is U-scoloptoxin(16)-Er7a from Ethmostigmus rubripes (Giant centipede).